Here is a 226-residue protein sequence, read N- to C-terminus: CD9 antigen (226 aa).

Topologically, residues 1–12 are cytoplasmic; sequence MPVKGGTKCIKY. Cys9 carries the S-palmitoyl cysteine lipid modification. A helical transmembrane segment spans residues 13 to 33; the sequence is LLFGFNFIFWLAGIAVLAVGL. Residues 34–53 lie on the Extracellular side of the membrane; that stretch reads WLRFDSQTKSIFEQDSQPSS. Residues 54-74 form a helical membrane-spanning segment; it reads FYTGVYILIGAGALMMLVGFL. Topologically, residues 75–85 are cytoplasmic; it reads GCCGAVQESQC. 3 S-palmitoyl cysteine lipidation sites follow: Cys76, Cys77, and Cys85. The helical transmembrane segment at 86 to 109 threads the bilayer; it reads MLGLFFGFLLVIFAIEIAAAIWGY. The Extracellular portion of the chain corresponds to 110–193; it reads SHKDEVIQEV…KEVFHNKFHI (84 aa). 2 disulfide bridges follow: Cys150/Cys179 and Cys151/Cys165. The helical transmembrane segment at 194–219 threads the bilayer; the sequence is IGAVGIGIAVVMIFGMIFSMILCCAI. S-palmitoyl cysteine attachment occurs at residues Cys216 and Cys217. The Cytoplasmic segment spans residues 220–226; it reads RRSREMV.

It belongs to the tetraspanin (TM4SF) family. As to quaternary structure, forms both disulfide-linked homodimers and higher homooligomers as well as heterooligomers with other members of the tetraspanin family. Interacts (via the second extracellular domain) with integrin ITGAV:ITGB3. Interacts with integrin ITGA6:ITGB1; interaction takes place in oocytes and is involved in sperm-egg fusion. Part of integrin-tetraspanin complexes composed of CD81, beta-1 and beta-2 integrins in the membrane of monocyte/macrophages. Interacts with CD63; identified in a complex with CD63 and ITGB3. Associates with CR2/CD21 and with PTGFRN/CD9P1. Part of a complex composed of CD9, CD81, PTGFRN and IGSF8. Interacts directly with IGSF8. Interacts with PDPN; this interaction is homophilic and attenuates platelet aggregation and pulmonary metastasis induced by PDPN. Interacts (on T cell side) with CD81 at immunological synapses between antigen-presenting cells and T cells. Post-translationally, palmitoylated at a low, basal level in unstimulated platelets. The level of palmitoylation increases when platelets are activated by thrombin (in vitro). The protein exists in three forms with molecular masses between 22 and 27 kDa, and is known to carry covalently linked fatty acids. Palmitoylation by ZDHHC2 regulates CD9 expression, association with other tetraspanin family proteins and function in cell adhesion.

Its subcellular location is the cell membrane. It localises to the membrane. It is found in the secreted. The protein localises to the extracellular exosome. Integral membrane protein associated with integrins, which regulates different processes, such as sperm-egg fusion, platelet activation and aggregation, and cell adhesion. Present at the cell surface of oocytes and plays a key role in sperm-egg fusion, possibly by organizing multiprotein complexes and the morphology of the membrane required for the fusion. In myoblasts, associates with CD81 and PTGFRN and inhibits myotube fusion during muscle regeneration. In macrophages, associates with CD81 and beta-1 and beta-2 integrins, and prevents macrophage fusion into multinucleated giant cells specialized in ingesting complement-opsonized large particles. Also prevents the fusion between mononuclear cell progenitors into osteoclasts in charge of bone resorption. Acts as a receptor for PSG17. Involved in platelet activation and aggregation. Regulates paranodal junction formation. Involved in cell adhesion, cell motility and tumor metastasis. The polypeptide is CD9 antigen (Felis catus (Cat)).